Here is a 128-residue protein sequence, read N- to C-terminus: uncharacterized protein (128 aa).

The interval 25-61 (LPNRLPEGSTVGPKPDSSWEAGSQGNWGLTSSGAGQD) is disordered. A compositionally biased stretch (polar residues) spans 44–61 (EAGSQGNWGLTSSGAGQD).

This is an uncharacterized protein from Homo sapiens (Human).